The chain runs to 349 residues: N-acetyltaurine hydrolase (349 aa).

Residues His26, His28, Glu169, His201, His230, and Asp298 each coordinate a divalent metal cation.

It belongs to the metallo-dependent hydrolases superfamily. Phosphotriesterase family. Requires a divalent metal cation as cofactor.

It localises to the cytoplasm. The protein resides in the cytosol. It catalyses the reaction N-acetyltaurine + H2O = taurine + acetate. It carries out the reaction N-propanoyltaurine + H2O = propanoate + taurine. The catalysed reaction is N-acetyl-L-methionine + H2O = L-methionine + acetate. The enzyme catalyses N-acetyl-L-isoleucine + H2O = L-isoleucine + acetate. It catalyses the reaction N-acetyl-L-leucine + H2O = L-leucine + acetate. It carries out the reaction N-acetyl-L-valine + H2O = L-valine + acetate. Its function is as follows. N-acetyltaurine hydrolase that catalyzes the hydrolysis of N-acetyltaurine into taurine and acetate. PTER also acts on other N-acetyl amino acids (Met, Ile, Leu, Val) and N-propionyltaurine, but at lower rates. The polypeptide is N-acetyltaurine hydrolase (pter) (Tetraodon nigroviridis (Spotted green pufferfish)).